The sequence spans 874 residues: Alanine--tRNA ligase (874 aa).

Zn(2+) is bound by residues His-561, His-565, Cys-663, and His-667.

The protein belongs to the class-II aminoacyl-tRNA synthetase family. Zn(2+) serves as cofactor.

It is found in the cytoplasm. It catalyses the reaction tRNA(Ala) + L-alanine + ATP = L-alanyl-tRNA(Ala) + AMP + diphosphate. Its function is as follows. Catalyzes the attachment of alanine to tRNA(Ala) in a two-step reaction: alanine is first activated by ATP to form Ala-AMP and then transferred to the acceptor end of tRNA(Ala). Also edits incorrectly charged Ser-tRNA(Ala) and Gly-tRNA(Ala) via its editing domain. This chain is Alanine--tRNA ligase, found in Trichodesmium erythraeum (strain IMS101).